Here is a 1168-residue protein sequence, read N- to C-terminus: Transcription-repair-coupling factor (1168 aa).

Residues 633 to 794 enclose the Helicase ATP-binding domain; the sequence is DMQKSRPMDR…MLGVRDLSVI (162 aa). Position 646–653 (646–653) interacts with ATP; sequence GDVGYGKT. Residues 747-750 carry the DEEQ box motif; sequence DEEQ. The 162-residue stretch at 808 to 969 folds into the Helicase C-terminal domain; that stretch reads VLEQNMSFIK…GFKIAMRDLN (162 aa).

The protein in the N-terminal section; belongs to the UvrB family. In the C-terminal section; belongs to the helicase family. RecG subfamily.

It is found in the cytoplasm. Couples transcription and DNA repair by recognizing RNA polymerase (RNAP) stalled at DNA lesions. Mediates ATP-dependent release of RNAP and its truncated transcript from the DNA, and recruitment of nucleotide excision repair machinery to the damaged site. The chain is Transcription-repair-coupling factor from Staphylococcus aureus (strain bovine RF122 / ET3-1).